Here is a 305-residue protein sequence, read N- to C-terminus: Aurasperone B biosynthesis cluster protein A (305 aa).

The first 26 residues, 1 to 26 (MSIFFSIRFWPAAISAAILWLPQVLG), serve as a signal peptide directing secretion. Residues Asn-29, Asn-34, Asn-64, Asn-83, Asn-132, Asn-183, Asn-218, and Asn-288 are each glycosylated (N-linked (GlcNAc...) asparagine).

This sequence belongs to the bfoA family.

In terms of biological role, part of the gene cluster that mediates the biosynthesis of aurasperone B, a dimeric gamma-naphthopyrone. The first step in the biosynthesis of aurasperone B is the production of gamma-naphthopyrone precursor YWA1 by the non-reducing polyketide synthase albA, via condensation of one acetyl-CoA starter unit with 6 malonyl-CoA units. YWA1 is then methylated by aunE at position C-6 to yield foncesin which is further methylated at position C-8 by aunD to produce fonsecin B. A key enzyme in the biosynthetic pathway is the cytochrome P450 monooxygenase aunB which catalyzes the oxidative dimerization of fonsecin B to aurasperone B. AunB also catalyzes the oxidative dimerization of rubrofusarin B into aurasperone A. This chain is Aurasperone B biosynthesis cluster protein A, found in Aspergillus niger (strain ATCC MYA-4892 / CBS 513.88 / FGSC A1513).